A 936-amino-acid chain; its full sequence is Isoleucine--tRNA ligase (936 aa).

Positions 58–68 (PYANGRAHLGT) match the 'HIGH' region motif. Position 561 (Glu561) interacts with L-isoleucyl-5'-AMP. Positions 602–606 (KMSKS) match the 'KMSKS' region motif. Lys605 contacts ATP. Positions 899, 902, 919, and 922 each coordinate Zn(2+).

This sequence belongs to the class-I aminoacyl-tRNA synthetase family. IleS type 1 subfamily. As to quaternary structure, monomer. Zn(2+) is required as a cofactor.

The protein localises to the cytoplasm. It carries out the reaction tRNA(Ile) + L-isoleucine + ATP = L-isoleucyl-tRNA(Ile) + AMP + diphosphate. Catalyzes the attachment of isoleucine to tRNA(Ile). As IleRS can inadvertently accommodate and process structurally similar amino acids such as valine, to avoid such errors it has two additional distinct tRNA(Ile)-dependent editing activities. One activity is designated as 'pretransfer' editing and involves the hydrolysis of activated Val-AMP. The other activity is designated 'posttransfer' editing and involves deacylation of mischarged Val-tRNA(Ile). The chain is Isoleucine--tRNA ligase from Coxiella burnetii (strain CbuG_Q212) (Coxiella burnetii (strain Q212)).